A 523-amino-acid chain; its full sequence is Lysine--tRNA ligase (523 aa).

The short motif at 30–38 is the 'HIGH' region element; sequence PSGYVHVGN. Zn(2+) is bound by residues D95, C99, H100, H106, C177, H180, C199, and H203. The 'KMSKS' region signature appears at 279–283; the sequence is KMSGS.

Belongs to the class-I aminoacyl-tRNA synthetase family. Zn(2+) is required as a cofactor.

The protein resides in the cytoplasm. It catalyses the reaction tRNA(Lys) + L-lysine + ATP = L-lysyl-tRNA(Lys) + AMP + diphosphate. In Pyrococcus furiosus (strain ATCC 43587 / DSM 3638 / JCM 8422 / Vc1), this protein is Lysine--tRNA ligase (lysS).